The following is a 592-amino-acid chain: 2-succinyl-5-enolpyruvyl-6-hydroxy-3-cyclohexene-1-carboxylate synthase (592 aa).

The protein belongs to the TPP enzyme family. MenD subfamily. Homodimer. Requires Mg(2+) as cofactor. It depends on Mn(2+) as a cofactor. The cofactor is thiamine diphosphate.

The enzyme catalyses isochorismate + 2-oxoglutarate + H(+) = 5-enolpyruvoyl-6-hydroxy-2-succinyl-cyclohex-3-ene-1-carboxylate + CO2. It functions in the pathway quinol/quinone metabolism; 1,4-dihydroxy-2-naphthoate biosynthesis; 1,4-dihydroxy-2-naphthoate from chorismate: step 2/7. Its pathway is quinol/quinone metabolism; menaquinone biosynthesis. Functionally, catalyzes the thiamine diphosphate-dependent decarboxylation of 2-oxoglutarate and the subsequent addition of the resulting succinic semialdehyde-thiamine pyrophosphate anion to isochorismate to yield 2-succinyl-5-enolpyruvyl-6-hydroxy-3-cyclohexene-1-carboxylate (SEPHCHC). The polypeptide is 2-succinyl-5-enolpyruvyl-6-hydroxy-3-cyclohexene-1-carboxylate synthase (Haloarcula marismortui (strain ATCC 43049 / DSM 3752 / JCM 8966 / VKM B-1809) (Halobacterium marismortui)).